The chain runs to 190 residues: B3 domain-containing protein At4g01580 (190 aa).

The interval M1–S25 is disordered. The segment covering T12–P23 has biased composition (polar residues). The segment at residues K29–S122 is a DNA-binding region (TF-B3).

The protein resides in the nucleus. The chain is B3 domain-containing protein At4g01580 from Arabidopsis thaliana (Mouse-ear cress).